The following is a 162-amino-acid chain: NADH-quinone oxidoreductase subunit C (162 aa).

This sequence belongs to the complex I 30 kDa subunit family. As to quaternary structure, NDH-1 is composed of 14 different subunits. Subunits NuoB, C, D, E, F, and G constitute the peripheral sector of the complex.

The protein resides in the cell inner membrane. The catalysed reaction is a quinone + NADH + 5 H(+)(in) = a quinol + NAD(+) + 4 H(+)(out). In terms of biological role, NDH-1 shuttles electrons from NADH, via FMN and iron-sulfur (Fe-S) centers, to quinones in the respiratory chain. The immediate electron acceptor for the enzyme in this species is believed to be ubiquinone. Couples the redox reaction to proton translocation (for every two electrons transferred, four hydrogen ions are translocated across the cytoplasmic membrane), and thus conserves the redox energy in a proton gradient. This Trichlorobacter lovleyi (strain ATCC BAA-1151 / DSM 17278 / SZ) (Geobacter lovleyi) protein is NADH-quinone oxidoreductase subunit C.